We begin with the raw amino-acid sequence, 465 residues long: Hydroxyacid-oxoacid transhydrogenase, mitochondrial (465 aa).

The protein belongs to the iron-containing alcohol dehydrogenase family. Hydroxyacid-oxoacid transhydrogenase subfamily.

Its subcellular location is the mitochondrion. It carries out the reaction (S)-3-hydroxybutanoate + 2-oxoglutarate = (R)-2-hydroxyglutarate + acetoacetate. It catalyses the reaction 4-hydroxybutanoate + 2-oxoglutarate = (R)-2-hydroxyglutarate + succinate semialdehyde. Its function is as follows. Catalyzes the cofactor-independent reversible oxidation of gamma-hydroxybutyrate (GHB) to succinic semialdehyde (SSA) coupled to reduction of 2-ketoglutarate (2-KG) to D-2-hydroxyglutarate (D-2-HG). L-3-hydroxybutyrate (L-3-OHB) is also a substrate for HOT when using 2-KG as hydrogen acceptor, resulting in the formation of D-2-HG. The polypeptide is Hydroxyacid-oxoacid transhydrogenase, mitochondrial (Caenorhabditis briggsae).